We begin with the raw amino-acid sequence, 206 residues long: Small ribosomal subunit protein uS4 (206 aa).

The S4 RNA-binding domain maps to 96–159 (SRLDNVVYRM…KKQARIVEGL (64 aa)).

Belongs to the universal ribosomal protein uS4 family. Part of the 30S ribosomal subunit. Contacts protein S5. The interaction surface between S4 and S5 is involved in control of translational fidelity.

Its function is as follows. One of the primary rRNA binding proteins, it binds directly to 16S rRNA where it nucleates assembly of the body of the 30S subunit. With S5 and S12 plays an important role in translational accuracy. In Chromobacterium violaceum (strain ATCC 12472 / DSM 30191 / JCM 1249 / CCUG 213 / NBRC 12614 / NCIMB 9131 / NCTC 9757 / MK), this protein is Small ribosomal subunit protein uS4.